A 117-amino-acid chain; its full sequence is UPF0122 protein Teth514_1714 (117 aa).

Belongs to the UPF0122 family.

Might take part in the signal recognition particle (SRP) pathway. This is inferred from the conservation of its genetic proximity to ftsY/ffh. May be a regulatory protein. The polypeptide is UPF0122 protein Teth514_1714 (Thermoanaerobacter sp. (strain X514)).